A 495-amino-acid polypeptide reads, in one-letter code: 1-aminocyclopropane-1-carboxylate synthase 6 (495 aa).

The substrate site is built by Glu-58 and Tyr-96. At Lys-280 the chain carries N6-(pyridoxal phosphate)lysine. Phosphoserine occurs at positions 480, 483, and 488.

It belongs to the class-I pyridoxal-phosphate-dependent aminotransferase family. In terms of assembly, homodimer and heterodimer. In vivo, the relevance of heterodimerization with other ACS enzymes is however unsure. Interacts with GRF3. The cofactor is pyridoxal 5'-phosphate. Phosphorylated on serine residue by MAP kinase (MPK6). Post-translationally, may be processed at its C-terminus. In terms of tissue distribution, expressed in roots and flowers.

The catalysed reaction is S-adenosyl-L-methionine = 1-aminocyclopropane-1-carboxylate + S-methyl-5'-thioadenosine + H(+). Its pathway is alkene biosynthesis; ethylene biosynthesis via S-adenosyl-L-methionine; ethylene from S-adenosyl-L-methionine: step 1/2. Its function is as follows. 1-aminocyclopropane-1-carboxylate synthase (ACS) enzymes catalyze the conversion of S-adenosyl-L-methionine (SAM) into 1-aminocyclopropane-1-carboxylate (ACC), a direct precursor of ethylene. Involved in bacterial flagellin-induced ethylene production. This chain is 1-aminocyclopropane-1-carboxylate synthase 6 (ACS6), found in Arabidopsis thaliana (Mouse-ear cress).